The chain runs to 480 residues: Probable cyclodipeptide synthase PUL1 (480 aa).

It participates in siderophore biosynthesis. Functionally, probable cyclodipeptide synthase; part of the PUL gene cluster that mediates the formation of pulcherrimin, a red iron-containing pigment composed of two cyclized and modified leucine molecules that acts as a siderophore, a chelator that binds iron outside the cell for subsequent uptake. Two leucine molecules are cyclized via a cyclodipeptide synthase, and the resulting diketopiperazine is oxidized by a cytochrome P450 monooxygenase to generate pulcherriminic acid (PA), which can then spontaneously bind iron to form pulcherrimin. The probable cyclodipeptide synthase PUL1 and the cytochrome P450 monooxygenase PUL2 encode the enzymes responsible for the two-step pulcherrimin biosynthesis pathway. The polypeptide is Probable cyclodipeptide synthase PUL1 (Kluyveromyces lactis (strain ATCC 8585 / CBS 2359 / DSM 70799 / NBRC 1267 / NRRL Y-1140 / WM37) (Yeast)).